A 693-amino-acid polypeptide reads, in one-letter code: Protein-glutamine gamma-glutamyltransferase E (693 aa).

Tyrosine 111 is modified (phosphotyrosine). Threonine 112 is modified (phosphothreonine). Positions 222, 225, 227, 228, and 230 each coordinate Ca(2+). Residue cysteine 273 is part of the active site. Positions 302, 304, 306, 308, and 325 each coordinate Ca(2+). Residues histidine 331 and aspartate 354 contribute to the active site. Residues asparagine 394, threonine 416, glutamate 444, and glutamate 449 each contribute to the Ca(2+) site. Residues 457 to 483 (LDKLKPNASFGATSSRNPEGEDKEPSI) are disordered.

It belongs to the transglutaminase superfamily. Transglutaminase family. In terms of assembly, consists of two polypeptide chains, which are synthesized as a precursor form of a single polypeptide. The cofactor is Ca(2+). Activated by proteolytic processing. In vitro activation is commonly achieved by cleavage with dispase, a neutral bacterial protease. Physiological activation may be catalyzed by CTSL and, to a lesser extent, by CTSS. Expressed in skin and stomach and, at lower levels, in testis, kidney and spleen (at protein level). On the basis of its catalytic activity, detected in the epidermis, around the granular and spinous layers but not in the outermost cornified layers. In hair follicles, mainly located in the medulla and the hair cortex.

Its subcellular location is the cytoplasm. It catalyses the reaction L-glutaminyl-[protein] + L-lysyl-[protein] = [protein]-L-lysyl-N(6)-5-L-glutamyl-[protein] + NH4(+). Its function is as follows. Catalyzes the calcium-dependent formation of isopeptide cross-links between glutamine and lysine residues in various proteins, as well as the conjugation of polyamines to proteins. Involved in the formation of the cornified envelope (CE), a specialized component consisting of covalent cross-links of proteins beneath the plasma membrane of terminally differentiated keratinocytes. Catalyzes small proline-rich proteins (SPRR1 and SPRR2) and LOR cross-linking to form small interchain oligomers, which are further cross-linked by TGM1 onto the growing CE scaffold. In hair follicles, involved in cross-linking structural proteins to hardening the inner root sheath. The chain is Protein-glutamine gamma-glutamyltransferase E (Tgm3) from Mus musculus (Mouse).